The primary structure comprises 305 residues: MGHALCVCSRGTVIIDNKRYLFVQKLGEGGFSYVDLVEGLHDGHFYALKRILCHEQQDQEEAQREAEMHRLFQHPNILRLMAYSLKERGAKHEAWLLLPFFKKGTLWNEIERLKDQGSFLTEDQILPLLLGISRGLEAIHAKGYAHRDLKPTNILLGDEGQPVLMDLGSMNQACIQVEGSRQALALQDWAAQRCTISYRAPELFSVQSHCVIDERTDVWSLGCVLYAMMFGEGPYDMVFQKGDSVALAVQNELSIPQSPRHSSALRQLLSSMMTVDPQQRPHIPVLLSQLEALQPPAPGQHTTQI.

Residue Gly-2 is the site of N-myristoyl glycine attachment. S-palmitoyl cysteine attachment occurs at residues Cys-6 and Cys-8. Positions Tyr-20 to Leu-293 constitute a Protein kinase domain. Residues Leu-26–Val-34 and Lys-49 contribute to the ATP site. The Proton acceptor role is filled by Asp-148. Residues Asp-166–Glu-202 are activation loop. Ser-197 bears the Phosphoserine; by autocatalysis mark. At Tyr-198 the chain carries Phosphotyrosine; by autocatalysis.

Belongs to the protein kinase superfamily. Ser/Thr protein kinase family. Monomer. Interacts with DRG1 (via its N-terminal); the interaction phosphorylates DRG1. Mainly autophosphorylated on serine/threonine residues. Also autophosphorylated on Tyr-198. In terms of tissue distribution, ubiquitously expressed at low levels. Relatively higher levels in testis, kidney and liver.

It is found in the cytoplasm. The protein localises to the perinuclear region. It localises to the membrane. It catalyses the reaction L-seryl-[protein] + ATP = O-phospho-L-seryl-[protein] + ADP + H(+). The catalysed reaction is L-threonyl-[protein] + ATP = O-phospho-L-threonyl-[protein] + ADP + H(+). The enzyme catalyses L-tyrosyl-[protein] + ATP = O-phospho-L-tyrosyl-[protein] + ADP + H(+). Functionally, membrane-associated protein kinase that phosphorylates on serine and threonine residues. In vitro substrates include DRG1, ENO1 and EIF4EBP1. Also autophosphorylates. May be involved in secretory vesicle trafficking or intracellular signaling. May have a role in regulating stromal-epithelial interactions that occur during ductal morphogenesis in the mammary gland. May be involved in TGF-beta signaling. Able to autophosphorylate on Tyr residue; it is however unclear whether it has tyrosine-protein kinase toward other proteins. The polypeptide is Serine/threonine-protein kinase 16 (Stk16) (Mus musculus (Mouse)).